The sequence spans 359 residues: 3-dehydroquinate synthase (359 aa).

NAD(+)-binding positions include 71 to 76 (DGEAYK), 105 to 109 (GVVGD), 129 to 130 (TT), Lys-142, and Lys-151. Zn(2+) is bound by residues Glu-184, His-247, and His-264.

Belongs to the sugar phosphate cyclases superfamily. Dehydroquinate synthase family. The cofactor is Co(2+). Zn(2+) is required as a cofactor. Requires NAD(+) as cofactor.

The protein localises to the cytoplasm. The enzyme catalyses 7-phospho-2-dehydro-3-deoxy-D-arabino-heptonate = 3-dehydroquinate + phosphate. Its pathway is metabolic intermediate biosynthesis; chorismate biosynthesis; chorismate from D-erythrose 4-phosphate and phosphoenolpyruvate: step 2/7. Its function is as follows. Catalyzes the conversion of 3-deoxy-D-arabino-heptulosonate 7-phosphate (DAHP) to dehydroquinate (DHQ). The chain is 3-dehydroquinate synthase from Burkholderia lata (strain ATCC 17760 / DSM 23089 / LMG 22485 / NCIMB 9086 / R18194 / 383).